A 767-amino-acid polypeptide reads, in one-letter code: Two-component response regulator-like PRR73 (767 aa).

The interval 1–64 (MGSACEAGTD…EPQQTDEQKE (64 aa)) is disordered. The region spanning 82-200 (RVLLVENDDS…ELKNLWQHVW (119 aa)) is the Response regulatory domain. A compositionally biased stretch (low complexity) spans 205 to 214 (SSSGSGSESG). Disordered stretches follow at residues 205–272 (SSSG…QSSW), 312–388 (RWLP…NEPT), 476–546 (ASNQ…RGKV), 646–701 (ANYS…SGSG), and 727–767 (NFGK…DEDR). A compositionally biased stretch (acidic residues) spans 238–252 (DNEDDDDNDEDDDDL). Polar residues-rich tracts occupy residues 263-272 (DNGSGTQSSW), 343-361 (RNSSMEYQSSPREMSVNPT), and 488-497 (CSPQDNSSEA). Residues 518–531 (GSNGSSNNNDMGSS) show a composition bias toward low complexity. Positions 532 to 543 (TKNAITKPSSNR) are enriched in polar residues. Residues 689–700 (GAGGGNGSGSGS) are compositionally biased toward gly residues. The region spanning 712–754 (REAALNKFRQKRKVRNFGKKVRYQSRKRLAEQRPRIRGQFVRQ) is the CCT domain. Over residues 727–738 (NFGKKVRYQSRK) the composition is skewed to basic residues.

This sequence belongs to the ARR-like family.

The protein localises to the nucleus. Controls photoperiodic flowering response. Seems to be one of the component of the circadian clock. Expression of several members of the ARR-like family is controlled by circadian rhythm. The particular coordinated sequential expression of PRR73, PRR37, PRR95, PRR59 and PPR1 result to circadian waves that may be at the basis of the endogenous circadian clock. The chain is Two-component response regulator-like PRR73 (PRR73) from Oryza sativa subsp. japonica (Rice).